The following is a 539-amino-acid chain: MEGENDPLLGSYKPKRRRSSLVYGLSRPQFLDTAASEVSPIPQERPTTSLRKPTPRVQRPATDVSYGALEETEENESIASGLSVQEDFNSKAWWKELTLLIKFATPVVLTSLLQYGEVVTTVFSLGHLGKTELAAASLSNMTATITAFAIYQGIVSALDTVGTQSFGSGNYEMVGLHLQRILAILLLIQFPIFLIWWKIEGILLFLRQDPLTCMFAAKYMRVMMLASPAYALFEALKRFLQVQGIFHPVTYILAIVVPINIFLNYLFVWSPWVGFGFLGAPVAVALTLWSACAVLIIYIMKVNGRQAWGGFSREALKNWGPLCRLAVPGVIMICSEYWAFELVTFASGVLGTTELASMSVLSTTSTLSYNLAFGVAAAAATRVGNLIGAGNTKLAKLATHVSINLGAAIGVIIAVILFLTRNTWTYIFTSDKDVVALVATIIPLVALINIADNTQCVAGGLLRGQGRQRIGGVVNFIAYYLLGLPVAIILCFKLDWGLYGLWIGIGAAILIIAGVETWCSLHVNWDHLVELANRQFDEA.

Positions 34–63 (AASEVSPIPQERPTTSLRKPTPRVQRPATD) are disordered. Transmembrane regions (helical) follow at residues 103–123 (FATP…TTVF), 141–161 (MTAT…LDTV), 184–204 (ILLL…GILL), 244–264 (GIFH…IFLN), 277–299 (FLGA…IIYI), 325–345 (LAVP…LVTF), 360–380 (VLST…AAAA), 399–419 (THVS…ILFL), 434–454 (VVAL…ADNT), 470–490 (IGGV…AIIL), and 496–516 (WGLY…AGVE).

The protein belongs to the multi antimicrobial extrusion (MATE) (TC 2.A.66.1) family.

It localises to the vacuole membrane. This is an uncharacterized protein from Schizosaccharomyces pombe (strain 972 / ATCC 24843) (Fission yeast).